The following is a 62-amino-acid chain: UPF0339 protein Atu0232 (62 aa).

The protein belongs to the UPF0339 family.

The sequence is that of UPF0339 protein Atu0232 from Agrobacterium fabrum (strain C58 / ATCC 33970) (Agrobacterium tumefaciens (strain C58)).